We begin with the raw amino-acid sequence, 63 residues long: Large ribosomal subunit protein uL29 (63 aa).

The protein belongs to the universal ribosomal protein uL29 family.

The sequence is that of Large ribosomal subunit protein uL29 from Glaesserella parasuis serovar 5 (strain SH0165) (Haemophilus parasuis).